Consider the following 161-residue polypeptide: RNA pyrophosphohydrolase (161 aa).

The 143-residue stretch at 12 to 154 folds into the Nudix hydrolase domain; the sequence is PYRPGVGMMI…KRKLYQAVVK (143 aa). The Nudix box signature appears at 46-67; sequence GGIVPGETPSIAAMREMLEEIG.

This sequence belongs to the Nudix hydrolase family. RppH subfamily. It depends on a divalent metal cation as a cofactor.

Functionally, accelerates the degradation of transcripts by removing pyrophosphate from the 5'-end of triphosphorylated RNA, leading to a more labile monophosphorylated state that can stimulate subsequent ribonuclease cleavage. The protein is RNA pyrophosphohydrolase of Rickettsia bellii (strain OSU 85-389).